The sequence spans 385 residues: Succinyl-diaminopimelate desuccinylase (385 aa).

Zn(2+) is bound at residue His-73. Asp-75 is a catalytic residue. Asp-106 serves as a coordination point for Zn(2+). The active-site Proton acceptor is Glu-141. Zn(2+)-binding residues include Glu-142, Glu-170, and His-359.

This sequence belongs to the peptidase M20A family. DapE subfamily. As to quaternary structure, homodimer. Zn(2+) is required as a cofactor. It depends on Co(2+) as a cofactor.

The enzyme catalyses N-succinyl-(2S,6S)-2,6-diaminopimelate + H2O = (2S,6S)-2,6-diaminopimelate + succinate. The protein operates within amino-acid biosynthesis; L-lysine biosynthesis via DAP pathway; LL-2,6-diaminopimelate from (S)-tetrahydrodipicolinate (succinylase route): step 3/3. Functionally, catalyzes the hydrolysis of N-succinyl-L,L-diaminopimelic acid (SDAP), forming succinate and LL-2,6-diaminopimelate (DAP), an intermediate involved in the bacterial biosynthesis of lysine and meso-diaminopimelic acid, an essential component of bacterial cell walls. The polypeptide is Succinyl-diaminopimelate desuccinylase (Methylorubrum extorquens (strain PA1) (Methylobacterium extorquens)).